Consider the following 369-residue polypeptide: Anhydro-N-acetylmuramic acid kinase (369 aa).

12-19 (GTSLDGVD) is a binding site for ATP.

This sequence belongs to the anhydro-N-acetylmuramic acid kinase family.

It carries out the reaction 1,6-anhydro-N-acetyl-beta-muramate + ATP + H2O = N-acetyl-D-muramate 6-phosphate + ADP + H(+). The protein operates within amino-sugar metabolism; 1,6-anhydro-N-acetylmuramate degradation. It participates in cell wall biogenesis; peptidoglycan recycling. Functionally, catalyzes the specific phosphorylation of 1,6-anhydro-N-acetylmuramic acid (anhMurNAc) with the simultaneous cleavage of the 1,6-anhydro ring, generating MurNAc-6-P. Is required for the utilization of anhMurNAc either imported from the medium or derived from its own cell wall murein, and thus plays a role in cell wall recycling. The protein is Anhydro-N-acetylmuramic acid kinase of Escherichia coli (strain SMS-3-5 / SECEC).